The following is a 183-amino-acid chain: Peptide deformylase (183 aa).

Fe cation contacts are provided by cysteine 110 and histidine 153. Residue glutamate 154 is part of the active site. Histidine 157 lines the Fe cation pocket.

This sequence belongs to the polypeptide deformylase family. Fe(2+) serves as cofactor.

The catalysed reaction is N-terminal N-formyl-L-methionyl-[peptide] + H2O = N-terminal L-methionyl-[peptide] + formate. Its function is as follows. Removes the formyl group from the N-terminal Met of newly synthesized proteins. Requires at least a dipeptide for an efficient rate of reaction. N-terminal L-methionine is a prerequisite for activity but the enzyme has broad specificity at other positions. This Listeria monocytogenes serotype 4a (strain HCC23) protein is Peptide deformylase.